The primary structure comprises 156 residues: MQIIEGKLQLQGNERVAILTSRFNHIITDRLKEGAMDCFKRHGGDEKLLDIVLVPGAYELPLILDKLLESEKYDGVCVLGAIIRGGTPHFDYVSAEATKGIASAMLKYSMPVSFGVLTTDNIEQAIERAGSKAGNKGFEAMSTLIELLSLCQTLKG.

Residues Phe-23, 57–59 (AYE), and 81–83 (AII) each bind 5-amino-6-(D-ribitylamino)uracil. 86 to 87 (GT) provides a ligand contact to (2S)-2-hydroxy-3-oxobutyl phosphate. His-89 functions as the Proton donor in the catalytic mechanism. Residue Phe-114 participates in 5-amino-6-(D-ribitylamino)uracil binding. Arg-128 contributes to the (2S)-2-hydroxy-3-oxobutyl phosphate binding site.

The protein belongs to the DMRL synthase family.

It catalyses the reaction (2S)-2-hydroxy-3-oxobutyl phosphate + 5-amino-6-(D-ribitylamino)uracil = 6,7-dimethyl-8-(1-D-ribityl)lumazine + phosphate + 2 H2O + H(+). Its pathway is cofactor biosynthesis; riboflavin biosynthesis; riboflavin from 2-hydroxy-3-oxobutyl phosphate and 5-amino-6-(D-ribitylamino)uracil: step 1/2. Functionally, catalyzes the formation of 6,7-dimethyl-8-ribityllumazine by condensation of 5-amino-6-(D-ribitylamino)uracil with 3,4-dihydroxy-2-butanone 4-phosphate. This is the penultimate step in the biosynthesis of riboflavin. The chain is 6,7-dimethyl-8-ribityllumazine synthase from Helicobacter pylori (strain G27).